The primary structure comprises 162 residues: ATP synthase subunit b (162 aa).

Residues 4 to 24 (INWGSIIYQLIAFCVLLWLLS) form a helical membrane-spanning segment.

It belongs to the ATPase B chain family. In terms of assembly, F-type ATPases have 2 components, F(1) - the catalytic core - and F(0) - the membrane proton channel. F(1) has five subunits: alpha(3), beta(3), gamma(1), delta(1), epsilon(1). F(0) has three main subunits: a(1), b(2) and c(10-14). The alpha and beta chains form an alternating ring which encloses part of the gamma chain. F(1) is attached to F(0) by a central stalk formed by the gamma and epsilon chains, while a peripheral stalk is formed by the delta and b chains.

It is found in the cell membrane. Functionally, f(1)F(0) ATP synthase produces ATP from ADP in the presence of a proton or sodium gradient. F-type ATPases consist of two structural domains, F(1) containing the extramembraneous catalytic core and F(0) containing the membrane proton channel, linked together by a central stalk and a peripheral stalk. During catalysis, ATP synthesis in the catalytic domain of F(1) is coupled via a rotary mechanism of the central stalk subunits to proton translocation. Its function is as follows. Component of the F(0) channel, it forms part of the peripheral stalk, linking F(1) to F(0). The protein is ATP synthase subunit b of Halalkalibacterium halodurans (strain ATCC BAA-125 / DSM 18197 / FERM 7344 / JCM 9153 / C-125) (Bacillus halodurans).